Reading from the N-terminus, the 227-residue chain is Ribonuclease 3 (227 aa).

The RNase III domain maps to 6-128 (ASDYQQRIGY…VIAAIYLDAD (123 aa)). Residue glutamate 41 coordinates Mg(2+). Aspartate 45 is an active-site residue. Residues aspartate 114 and glutamate 117 each contribute to the Mg(2+) site. Residue glutamate 117 is part of the active site. The region spanning 155–225 (DPKTRLQEWL…ASHAINQLDS (71 aa)) is the DRBM domain. A compositionally biased stretch (basic and acidic residues) spans 203–212 (GEGSSRRLAE). The tract at residues 203-227 (GEGSSRRLAEQDAASHAINQLDSNK) is disordered.

It belongs to the ribonuclease III family. In terms of assembly, homodimer. Mg(2+) is required as a cofactor.

The protein resides in the cytoplasm. The catalysed reaction is Endonucleolytic cleavage to 5'-phosphomonoester.. Functionally, digests double-stranded RNA. Involved in the processing of primary rRNA transcript to yield the immediate precursors to the large and small rRNAs (23S and 16S). Processes some mRNAs, and tRNAs when they are encoded in the rRNA operon. Processes pre-crRNA and tracrRNA of type II CRISPR loci if present in the organism. The chain is Ribonuclease 3 from Xylella fastidiosa (strain M12).